A 588-amino-acid chain; its full sequence is Calicin (588 aa).

Residues Trp-28–Glu-98 form the BTB domain. Residue Ser-149 is modified to Phosphoserine. Kelch repeat units lie at residues Ser-280–Arg-327, Tyr-328–Gly-375, Val-377–Asp-423, Asn-425–Gln-475, Asp-476–Asn-525, and Lys-526–Leu-580.

As to quaternary structure, interacts with CYLC1; the interaction may be relevant for proper acrosome attachment to the nuclear envelope. As to expression, expressed in testis and in spermatozoa (at protein level).

The protein resides in the cytoplasm. It is found in the cytoskeleton. Its subcellular location is the perinuclear theca. The protein localises to the calyx. Functionally, required for both nuclear and acrosomal shaping during spermiogenesis. This Bos taurus (Bovine) protein is Calicin (CCIN).